Reading from the N-terminus, the 220-residue chain is Deoxyribose-phosphate aldolase (220 aa).

D89 serves as the catalytic Proton donor/acceptor. Residue K151 is the Schiff-base intermediate with acetaldehyde of the active site. The active-site Proton donor/acceptor is K180.

It belongs to the DeoC/FbaB aldolase family. DeoC type 1 subfamily.

It localises to the cytoplasm. It catalyses the reaction 2-deoxy-D-ribose 5-phosphate = D-glyceraldehyde 3-phosphate + acetaldehyde. It participates in carbohydrate degradation; 2-deoxy-D-ribose 1-phosphate degradation; D-glyceraldehyde 3-phosphate and acetaldehyde from 2-deoxy-alpha-D-ribose 1-phosphate: step 2/2. Functionally, catalyzes a reversible aldol reaction between acetaldehyde and D-glyceraldehyde 3-phosphate to generate 2-deoxy-D-ribose 5-phosphate. This is Deoxyribose-phosphate aldolase from Streptococcus pneumoniae (strain 70585).